The chain runs to 65 residues: Large ribosomal subunit protein uL29 (65 aa).

The protein belongs to the universal ribosomal protein uL29 family.

The sequence is that of Large ribosomal subunit protein uL29 from Lactobacillus johnsonii (strain CNCM I-12250 / La1 / NCC 533).